We begin with the raw amino-acid sequence, 549 residues long: Phosphoenolpyruvate carboxykinase (ATP) (549 aa).

Glycine 250–threonine 257 contributes to the ATP binding site.

The protein belongs to the phosphoenolpyruvate carboxykinase (ATP) family. Homotetramer.

The enzyme catalyses oxaloacetate + ATP = phosphoenolpyruvate + ADP + CO2. It functions in the pathway carbohydrate biosynthesis; gluconeogenesis. This Saccharomyces cerevisiae (strain ATCC 204508 / S288c) (Baker's yeast) protein is Phosphoenolpyruvate carboxykinase (ATP) (PCK1).